A 186-amino-acid polypeptide reads, in one-letter code: Oligoribonuclease (186 aa).

The 164-residue stretch at 8-171 (LIWIDLEMTG…DDIRESIAEL (164 aa)) folds into the Exonuclease domain. Tyr-129 is a catalytic residue.

The protein belongs to the oligoribonuclease family.

It localises to the cytoplasm. Functionally, 3'-to-5' exoribonuclease specific for small oligoribonucleotides. This Mannheimia succiniciproducens (strain KCTC 0769BP / MBEL55E) protein is Oligoribonuclease.